A 735-amino-acid chain; its full sequence is MTSTGKDGGGAQHAQYVGPYRLEKTLGKGQTGLVKLGIHCVTCQKVAIKIVNREKLSESVLMKVEREIAILKLIEHPHVLKLHDVYENKKYLYLVLEHVSGGELFDYLVKKGRLTPKEARKFFRQIISALDFCHSHSICHRDLKPENLLLDERNNIRIADFGMASLQVGDSLLETSCGSPHYACPEVIRGEKYDGRKADVWSCGVILFALLVGALPFDDDNLRQLLEKVKRGVFHMPHFIPPDCQSLLRGMIEVDAARRLTLEHIQKHIWYIGGKNEPEPEQPIPRKVQIRSLPSLEDIDPDVLDSMHSLGCFRDRNKLLQDLLSEEENQEKMIYFLLLDRKERYPSHEDEDLPPRNEIDPPRKRVDSPMLNRHGKRRPERKSMEVLSVTDGGSPVPARRAIEMAQHGQRSRSISGASSGLSTSPLSSPRVTPHPSPRGSPLPTPKGTPVHTPKESPAGTPNPTPPSSPSVGGVPWRTRLNSIKNSFLGSPRFHRRKLQVPTPEEMSNLTPESSPELGHLQLFGNPVSKVRSVAMELVILVQTLAYTSFRLLGTFLPVRYLRHSVLSRPPERARLVLRGAPCTHMGPVWNMVGMAYTQNPPIMGETGVYGSQWVMSSAPSKHYTSLGLSVPSPSCSLSPSLFPFCAPDTTNCMEVMTGRLSKCGTPLSNFFDVIKQLFSDEKNGQAAQAPSTPAKRSAHGPLGDSAAAGPGGDTEYPMGKDMAKMGPPAARREQP.

One can recognise a Protein kinase domain in the interval 20 to 271; that stretch reads YRLEKTLGKG…LEHIQKHIWY (252 aa). ATP-binding positions include 26–34 and lysine 49; that span reads LGKGQTGLV. The active-site Proton acceptor is the aspartate 142. The residue at position 175 (threonine 175) is a Phosphothreonine; by LKB1. A Phosphothreonine; by PKA modification is found at threonine 261. Serine 295 is subject to Phosphoserine. Positions 298–340 constitute a UBA domain; it reads DIDPDVLDSMHSLGCFRDRNKLLQDLLSEEENQEKMIYFLLLD. The segment covering 346–367 has biased composition (basic and acidic residues); it reads PSHEDEDLPPRNEIDPPRKRVD. Disordered regions lie at residues 346–476, 493–514, and 682–735; these read PSHE…GVPW, FHRR…PESS, and KNGQ…REQP. Phosphoserine is present on residues serine 368, serine 383, serine 394, serine 413, alanine 417, serine 424, and serine 428. The segment covering 411–429 has biased composition (low complexity); it reads SRSISGASSGLSTSPLSSP. A compositionally biased stretch (pro residues) spans 432–446; it reads TPHPSPRGSPLPTPK. Serine 456 bears the Phosphoserine mark. Phosphothreonine is present on residues threonine 460, threonine 464, and threonine 510. Phosphoserine occurs at positions 513 and 514.

This sequence belongs to the protein kinase superfamily. CAMK Ser/Thr protein kinase family. SNF1 subfamily. In terms of assembly, interacts with FZR1, a regulatory subunit of the APC ubiquitin ligase complex. Interacts with COPS5. Interacts with PAK1. Requires Mg(2+) as cofactor. Post-translationally, may be phosphorylated at Thr-261 by PKA. Phosphorylated at Thr-175 by STK11/LKB1 in complex with STE20-related adapter-alpha (STRADA) pseudo kinase and CAB39. Not phosphorylated at Thr-175 by CaMKK2. In contrast, it is phosphorylated and activated by CaMKK1. May be inactivated via dephosphorylation of Thr-175 by PP2C. In terms of processing, polyubiquitinated by the APC complex in conjunction with FZR1, leading to its proteasomal degradation. Targeted for proteasomal degradation by interaction with COPS5. BRSK2 levels change during the cell cycle. BRSK2 levels are low at the G1/S boundary and gradually increase as cells progress into G2 phase. BRSK2 levels decrease rapidly at the end of mitosis.

It is found in the cytoplasm. The protein resides in the cytoskeleton. Its subcellular location is the microtubule organizing center. It localises to the centrosome. The protein localises to the perinuclear region. It is found in the endoplasmic reticulum. It carries out the reaction L-seryl-[protein] + ATP = O-phospho-L-seryl-[protein] + ADP + H(+). The enzyme catalyses L-threonyl-[protein] + ATP = O-phospho-L-threonyl-[protein] + ADP + H(+). The catalysed reaction is L-seryl-[tau protein] + ATP = O-phospho-L-seryl-[tau protein] + ADP + H(+). It catalyses the reaction L-threonyl-[tau protein] + ATP = O-phospho-L-threonyl-[tau protein] + ADP + H(+). Its activity is regulated as follows. Activated by phosphorylation on Thr-175 by STK11/LKB1. In terms of biological role, serine/threonine-protein kinase that plays a key role in polarization of neurons and axonogenesis, cell cycle progress and insulin secretion. Phosphorylates CDK16, CDC25C, MAPT/TAU, PAK1 and WEE1. Following phosphorylation and activation by STK11/LKB1, acts as a key regulator of polarization of cortical neurons, probably by mediating phosphorylation of microtubule-associated proteins such as MAPT/TAU at 'Thr-523' and 'Ser-573'. Also regulates neuron polarization by mediating phosphorylation of WEE1 at 'Ser-642' in post-mitotic neurons, leading to down-regulate WEE1 activity in polarized neurons. Plays a role in the regulation of the mitotic cell cycle progress and the onset of mitosis. Plays a role in the regulation of insulin secretion in response to elevated glucose levels, probably via phosphorylation of CDK16 and PAK1. While BRSK2 phosphorylated at Thr-175 can inhibit insulin secretion, BRSK2 phosphorylated at Thr-261 can promote insulin secretion. Regulates reorganization of the actin cytoskeleton. May play a role in the apoptotic response triggered by endoplasmic reticulum (ER) stress. This Rattus norvegicus (Rat) protein is Serine/threonine-protein kinase BRSK2 (Brsk2).